Here is a 311-residue protein sequence, read N- to C-terminus: Pyrimidine-specific ribonucleoside hydrolase RihA (311 aa).

Residue histidine 240 is part of the active site.

The protein belongs to the IUNH family. RihA subfamily.

In terms of biological role, hydrolyzes cytidine or uridine to ribose and cytosine or uracil, respectively. This is Pyrimidine-specific ribonucleoside hydrolase RihA from Salmonella enteritidis PT4 (strain P125109).